Reading from the N-terminus, the 333-residue chain is cGAMP-activated phospholipase (333 aa).

Residues 10–191 (LALSGGGYRG…VGNAPGLFGL (182 aa)) form the PNPLA domain. A GXGXXG motif is present at residues 14–19 (GGGYRG). The GXSXG signature appears at 46 to 50 (GTSAG). The active-site Nucleophile is S48. D178 (proton acceptor) is an active-site residue. Residues 178 to 180 (DGG) carry the DGA/G motif.

This sequence belongs to the patatin family.

The enzyme catalyses a 1,2-diacyl-sn-glycero-3-phosphocholine + H2O = a 2-acyl-sn-glycero-3-phosphocholine + a fatty acid + H(+). The catalysed reaction is 1,2-di-(9Z-octadecenoyl)-sn-glycero-3-phosphoethanolamine + 2 H2O = sn-glycero-3-phosphoethanolamine + 2 (9Z)-octadecenoate + 2 H(+). With respect to regulation, phospholipase activity is specifically activated upon cGAMP binding, which is produced by the cognate cyclic nucleotide synthase encoded in the same operon. Is not activated by cyclic dinucleotides 2',3'-cGAMP, c-diAMP or 3',3'-c-diGMP. Effector phospholipase of a CBASS antiviral system. CBASS (cyclic oligonucleotide-based antiphage signaling system) provides immunity against bacteriophages. The CD-NTase protein (CdnA) synthesizes cyclic nucleotides in response to infection; these serve as specific second messenger signals. The signals activate a diverse range of effectors, leading to bacterial cell death and thus abortive phage infection. A type II-A(GA) CBASS system. Its function is as follows. Phospholipase that is activated upon binding to the cyclic dinucleotide (CDN) second messenger 3',3'-cyclic GMP-AMP (cGAMP). Degrades phospholipids in the cell membrane. Functionally, the capV-cdnA-cap2-cap3 operon provides about 10(4)-fold protection in strain BWHPSA011 against infection by phage PaMx41. In P.aeruginosa strain PAO1 it confers protection against phages PaMx41 and JBD18 but not JBD67 (JBD18 and JBD67 do not replicate in BWHPSA011 / Pa011). When acb2 in JBD67 is deleted this CBASS operon then protects against JDB67 also. This CBASS system limits prophage induction of lysogenized JBD67 as well as viral lytic replication. The polypeptide is cGAMP-activated phospholipase (Pseudomonas aeruginosa (strain BWHPSA011 / Pa011)).